The sequence spans 437 residues: GTPase Obg (437 aa).

Residues Ser-2–Leu-160 enclose the Obg domain. The tract at residues Gly-127–Glu-146 is disordered. Positions Ala-161–Asp-338 constitute an OBG-type G domain. GTP contacts are provided by residues Gly-167–Ser-174, Phe-192–Val-196, Asp-214–Gly-217, Asn-284–Asp-287, and Ser-319–Leu-321. Mg(2+) is bound by residues Ser-174 and Thr-194. The OCT domain maps to Gly-359 to Asp-437.

This sequence belongs to the TRAFAC class OBG-HflX-like GTPase superfamily. OBG GTPase family. In terms of assembly, monomer. It depends on Mg(2+) as a cofactor.

The protein resides in the cytoplasm. In terms of biological role, an essential GTPase which binds GTP, GDP and possibly (p)ppGpp with moderate affinity, with high nucleotide exchange rates and a fairly low GTP hydrolysis rate. Plays a role in control of the cell cycle, stress response, ribosome biogenesis and in those bacteria that undergo differentiation, in morphogenesis control. The chain is GTPase Obg from Streptococcus thermophilus (strain ATCC BAA-491 / LMD-9).